The sequence spans 194 residues: MSPITILLIGIAMSTDAFAAAIGKGAAIGKPRLRDALYVAVIFGVIETATPIAGWLLGQIASHYIATFDHWIAFGLLSGLGIHMIVNGLKNNGNTCKDNADTHNRNSRWLPLAATALATSIDAAAIGISLAFLDIHISIVAAVIGLCTFTMVIFGVMLGRVLGTFVGNRAEIVGGIILIIVGSTILYEHLSNNG.

The next 6 helical transmembrane spans lie at 3 to 23 (PITI…AAIG), 37 to 57 (LYVA…GWLL), 65 to 85 (IATF…IHMI), 112 to 132 (LAAT…SLAF), 139 to 159 (IVAA…VMLG), and 170 to 190 (AEIV…YEHL).

The protein belongs to the MntP (TC 9.B.29) family.

It is found in the cell inner membrane. Its function is as follows. Probably functions as a manganese efflux pump. This Xylella fastidiosa (strain 9a5c) protein is Putative manganese efflux pump MntP.